The following is an 86-amino-acid chain: Large ribosomal subunit protein eL31 (86 aa).

The protein belongs to the eukaryotic ribosomal protein eL31 family.

This Methanopyrus kandleri (strain AV19 / DSM 6324 / JCM 9639 / NBRC 100938) protein is Large ribosomal subunit protein eL31.